Consider the following 212-residue polypeptide: Regulatory protein RecX (212 aa).

Belongs to the RecX family.

The protein resides in the cytoplasm. In terms of biological role, modulates RecA activity. In Clostridium perfringens (strain SM101 / Type A), this protein is Regulatory protein RecX.